Consider the following 1385-residue polypeptide: Kinesin-like protein KIF15 (1385 aa).

The tract at residues 1-24 is disordered; that stretch reads MAPGCKSELRNVTNSHSNQPSNED. The segment covering 10–21 has biased composition (polar residues); it reads RNVTNSHSNQPS. The Kinesin motor domain occupies 26 to 363; sequence AIKVFVRIRP…LNFAQRAKLI (338 aa). ATP is bound at residue 109 to 116; that stretch reads GQTGSGKT. The stretch at 368 to 1385 forms a coiled coil; that stretch reads VVNEDTQGNV…NVFLKERKKE (1018 aa). K1007 is subject to N6-acetyllysine. Residues S1139 and S1167 each carry the phosphoserine modification. The interval 1222–1243 is disordered; it reads DMKRQGESSSQSRPDSQQLKNE. The span at 1228–1241 shows a compositional bias: polar residues; sequence ESSSQSRPDSQQLK.

Belongs to the TRAFAC class myosin-kinesin ATPase superfamily. Kinesin family. KLP2 subfamily. As to quaternary structure, interacts with MKI67 and TPX2. As to expression, expressed in sympathetic neurons.

Its subcellular location is the cytoplasm. The protein localises to the cytoskeleton. It localises to the spindle. Its function is as follows. Plus-end directed kinesin-like motor enzyme involved in mitotic spindle assembly. The protein is Kinesin-like protein KIF15 (Kif15) of Rattus norvegicus (Rat).